The sequence spans 75 residues: UPF0352 protein VSAL_I1058 (75 aa).

Belongs to the UPF0352 family.

The chain is UPF0352 protein VSAL_I1058 from Aliivibrio salmonicida (strain LFI1238) (Vibrio salmonicida (strain LFI1238)).